An 827-amino-acid polypeptide reads, in one-letter code: Polyhomeotic-like protein 2 (827 aa).

Disordered regions lie at residues 1–78, 282–316, and 482–545; these read MEKE…QYLQ, GLGAEPSPQGTAAKASPAETSSETTAKNDKTSDLT, and QEPT…PPQA. Over residues 9–38 the composition is skewed to low complexity; that stretch reads SVASSASVTIPSTTSVSTSTSAGTLSNSSS. Residues 485-498 show a composition bias toward basic and acidic residues; it reads TRTELRQSDKESQV. Polar residues predominate over residues 517–538; that stretch reads AMTSGSGNNAPTVTGSAPQNGE. The HD1 motif lies at 540–570; the sequence is KPPPQAVVKPQILTHVIEGFVIQEGAEPFPV. The FCS-type zinc-finger motif lies at 609–643; sequence NNQPEPVRTCEFCGNVDFAFNFKRSKRFCSTVCAK. Zn(2+) is bound by residues Cys-618, Cys-621, Cys-637, and Cys-641. Positions 653 to 730 are disordered; that stretch reads MGLFPGKSSP…EPISPLSNSS (78 aa). Positions 661 to 675 are enriched in basic and acidic residues; that stretch reads SPEDTKKPKASDESP. Composition is skewed to polar residues over residues 687 to 696 and 708 to 717; these read PSIQTTTGAS and GESSQCSDMS. Positions 763–827 constitute an SAM domain; sequence WNVEDVYEFI…FARISMLKDS (65 aa).

As to quaternary structure, component of a PRC1-like complex. In terms of tissue distribution, isoform 1 expression is stronger at the posterior border than in the anterior region within individual somites; On the contrary, isoform 2 expression is higher at the posterior border.

It localises to the nucleus. Its function is as follows. Component of a Polycomb group (PcG) multiprotein PRC1-like complex, a complex class required to maintain the transcriptionally repressive state of many genes, including Hox genes, throughout development. PcG PRC1 complex acts via chromatin remodeling and modification of histones; it mediates monoubiquitination of histone H2A 'Lys-119', rendering chromatin heritably changed in its expressibility. This is Polyhomeotic-like protein 2 (phc2) from Danio rerio (Zebrafish).